Here is a 196-residue protein sequence, read N- to C-terminus: Peroxynitrite isomerase (196 aa).

Positions 1–29 are disordered; it reads MSDENPLQPPWLNAPPVDPYPYEESHDLR. Pro residues predominate over residues 7 to 19; that stretch reads LQPPWLNAPPVDP. The GXWXGXG motif lies at 46-52; that stretch reads GVWRGRG. His186 is a heme b binding site.

The protein belongs to the nitrobindin family. Homodimer. Requires heme b as cofactor.

The enzyme catalyses peroxynitrite = nitrate. It functions in the pathway nitrogen metabolism. Functionally, heme-binding protein able to scavenge peroxynitrite and to protect free L-tyrosine against peroxynitrite-mediated nitration, by acting as a peroxynitrite isomerase that converts peroxynitrite to nitrate. Therefore, this protein likely plays a role in peroxynitrite sensing and in the detoxification of reactive nitrogen and oxygen species (RNS and ROS, respectively). Is able to bind nitric oxide (NO) in vitro, but may act as a sensor of peroxynitrite levels in vivo. The protein is Peroxynitrite isomerase of Salinispora arenicola (strain CNS-205).